Consider the following 594-residue polypeptide: UvrABC system protein C (594 aa).

In terms of domain architecture, GIY-YIG spans 17–94 (LEPGCYLMKD…IKQYQPRYNI (78 aa)). The UVR domain occupies 199 to 234 (KTILHHLEDRMNKASEQLDFEQAKEYRDMIQHIHNL).

Belongs to the UvrC family. Interacts with UvrB in an incision complex.

The protein localises to the cytoplasm. Its function is as follows. The UvrABC repair system catalyzes the recognition and processing of DNA lesions. UvrC both incises the 5' and 3' sides of the lesion. The N-terminal half is responsible for the 3' incision and the C-terminal half is responsible for the 5' incision. This chain is UvrABC system protein C, found in Staphylococcus epidermidis (strain ATCC 12228 / FDA PCI 1200).